A 248-amino-acid chain; its full sequence is tRNA1(Val) (adenine(37)-N6)-methyltransferase (248 aa).

It belongs to the methyltransferase superfamily. tRNA (adenine-N(6)-)-methyltransferase family.

It localises to the cytoplasm. It catalyses the reaction adenosine(37) in tRNA1(Val) + S-adenosyl-L-methionine = N(6)-methyladenosine(37) in tRNA1(Val) + S-adenosyl-L-homocysteine + H(+). Functionally, specifically methylates the adenine in position 37 of tRNA(1)(Val) (anticodon cmo5UAC). This chain is tRNA1(Val) (adenine(37)-N6)-methyltransferase, found in Musicola paradisiaca (strain Ech703) (Dickeya paradisiaca).